We begin with the raw amino-acid sequence, 323 residues long: Forkhead transcription factor fkh-6 (323 aa).

The fork-head DNA-binding region spans 21-122; that stretch reads KPPYSYVALI…DNGNFKRRRV (102 aa).

Its subcellular location is the nucleus. Its function is as follows. Probable transcription factor. Binds to the DNA sequence motif 5'-[TA]TGTT[TG]T[TG][ATG]TT-3'. Regulates sexual dimorphism in the gonad, promoting male gonadal cell fates in chromosomally (XO) male animals, yet plays a role in gonadogenesis in both sexes; probably acts downstream of terminal regulator of sex determination tra-1, to control early gonadogenesis. Positively modulates expression of homeobox protein egl-5, probably acting indirectly, during early gonadal development. The chain is Forkhead transcription factor fkh-6 from Caenorhabditis elegans.